We begin with the raw amino-acid sequence, 430 residues long: Lipoyl synthase, mitochondrial (430 aa).

The transit peptide at 1 to 29 (MASPVPIQRLQAPLRRSLARAAALSTRSY) directs the protein to the mitochondrion. Low complexity predominate over residues 28 to 58 (SYATIPSGPSSQPTSQESSSAASASAPATKP). The disordered stretch occupies residues 28–62 (SYATIPSGPSSQPTSQESSSAASASAPATKPRPTY). [4Fe-4S] cluster contacts are provided by C142, C147, C153, C173, C177, C180, and S390. The Radical SAM core domain maps to 156-379 (GSNKAAATAT…RQRALDMGFL (224 aa)).

Belongs to the radical SAM superfamily. Lipoyl synthase family. It depends on [4Fe-4S] cluster as a cofactor.

The protein resides in the mitochondrion. It catalyses the reaction [[Fe-S] cluster scaffold protein carrying a second [4Fe-4S](2+) cluster] + N(6)-octanoyl-L-lysyl-[protein] + 2 oxidized [2Fe-2S]-[ferredoxin] + 2 S-adenosyl-L-methionine + 4 H(+) = [[Fe-S] cluster scaffold protein] + N(6)-[(R)-dihydrolipoyl]-L-lysyl-[protein] + 4 Fe(3+) + 2 hydrogen sulfide + 2 5'-deoxyadenosine + 2 L-methionine + 2 reduced [2Fe-2S]-[ferredoxin]. Its pathway is protein modification; protein lipoylation via endogenous pathway; protein N(6)-(lipoyl)lysine from octanoyl-[acyl-carrier-protein]: step 2/2. Its function is as follows. Catalyzes the radical-mediated insertion of two sulfur atoms into the C-6 and C-8 positions of the octanoyl moiety bound to the lipoyl domains of lipoate-dependent enzymes, thereby converting the octanoylated domains into lipoylated derivatives. This Neurospora crassa (strain ATCC 24698 / 74-OR23-1A / CBS 708.71 / DSM 1257 / FGSC 987) protein is Lipoyl synthase, mitochondrial.